The primary structure comprises 97 residues: Class II hydrophobin NC2 (97 aa).

Positions 1-17 are cleaved as a signal peptide; that stretch reads MQFTIATVLSLLTITLA. Intrachain disulfides connect Cys-31–Cys-79, Cys-40–Cys-70, Cys-41–Cys-53, and Cys-80–Cys-91. The N-linked (GlcNAc...) asparagine glycan is linked to Asn-62.

The protein belongs to the cerato-ulmin hydrophobin family. In terms of assembly, homotrimer. Further self-assembles to form highly ordered films at water-air interfaces through intermolecular interactions.

It is found in the secreted. The protein localises to the cell wall. Functionally, aerial growth, conidiation, and dispersal of filamentous fungi in the environment rely upon a capability of their secreting small amphipathic proteins called hydrophobins (HPBs) with low sequence identity. Class I can self-assemble into an outermost layer of rodlet bundles on aerial cell surfaces, conferring cellular hydrophobicity that supports fungal growth, development and dispersal; whereas Class II form highly ordered films at water-air interfaces through intermolecular interactions but contribute nothing to the rodlet structure. NC2 is a class II hydrophobin that has the potential to adsorb to the hydrophobic interface at the hydrophobic-hydrophilic interface at very high rate but the predicted self-assembly NC2 film possesses a lower flexural rigidity than other class II hydrophobins such as HFBII from Hypocrea jecorina (also known as Trichoderma reesei). The sequence is that of Class II hydrophobin NC2 from Neurospora crassa (strain ATCC 24698 / 74-OR23-1A / CBS 708.71 / DSM 1257 / FGSC 987).